The following is a 648-amino-acid chain: Leucine aminopeptidase 2 (648 aa).

Residues 143–145 (QCQ) and 269–274 (PYGGME) contribute to the a peptide site. A Zn(2+)-binding site is contributed by histidine 298. Residue glutamate 299 is the Proton acceptor of the active site. The Zn(2+) site is built by histidine 302 and glutamate 321. The active-site Proton donor is tyrosine 408.

This sequence belongs to the peptidase M1 family. Zn(2+) serves as cofactor.

It localises to the cytoplasm. The protein localises to the nucleus. It carries out the reaction an epoxide + H2O = an ethanediol. Functionally, aminopeptidase that preferentially cleaves di- and tripeptides. Also has low epoxide hydrolase activity (in vitro). Can hydrolyze the epoxide leukotriene LTA(4) but it forms preferentially 5,6-dihydroxy-7,9,11,14-eicosatetraenoic acid rather than the cytokine leukotriene B(4) as the product compared to the homologous mammalian enzyme (in vitro). This is Leucine aminopeptidase 2 from Lodderomyces elongisporus (strain ATCC 11503 / CBS 2605 / JCM 1781 / NBRC 1676 / NRRL YB-4239) (Yeast).